We begin with the raw amino-acid sequence, 399 residues long: Elongation factor Tu (399 aa).

A tr-type G domain is found at 10–207; sequence KTHMNVGTIG…AVDSYFPDPV (198 aa). Positions 19 to 26 are G1; that stretch reads GHIDHGKT. Residue 19–26 participates in GTP binding; it reads GHIDHGKT. T26 contacts Mg(2+). The segment at 60-64 is G2; it reads GITIN. The tract at residues 81–84 is G3; the sequence is DCPG. GTP is bound by residues 81 to 85 and 136 to 139; these read DCPGH and NKVD. Residues 136 to 139 are G4; it reads NKVD. The tract at residues 174-176 is G5; that stretch reads SAL.

This sequence belongs to the TRAFAC class translation factor GTPase superfamily. Classic translation factor GTPase family. EF-Tu/EF-1A subfamily. Monomer.

The protein localises to the cytoplasm. The enzyme catalyses GTP + H2O = GDP + phosphate + H(+). Its function is as follows. GTP hydrolase that promotes the GTP-dependent binding of aminoacyl-tRNA to the A-site of ribosomes during protein biosynthesis. The protein is Elongation factor Tu of Petrotoga mobilis (strain DSM 10674 / SJ95).